Here is a 201-residue protein sequence, read N- to C-terminus: MRSFILRARSAPTDSQRLLDEIGGKCHTEILAHCMMNSLFTAQSHREDVVIHLVLESTRDYSRTITVEANEISDVGGFHEAALIALLVKALDASVGMGKEQTRVVQPGLTVRTISFEALLGELAEHHSLYMMDKKGDSIRDIKIGPNPCFILTDHIPMPKKSGNSMKRLGVEKISLGPKMLFASQCVTLIHNEIDHQEAGW.

Residues M132 and C186 each contribute to the S-adenosyl-L-methionine site.

This sequence belongs to the methyltransferase superfamily. TrmY family.

It localises to the cytoplasm. The sequence is that of Putative pseudouridine methyltransferase from Vibrio cholerae serotype O1 (strain ATCC 39315 / El Tor Inaba N16961).